The following is a 283-amino-acid chain: Pseudokinase OPG198 (283 aa).

Residues methionine 1 and lysine 30 each coordinate ATP. A Protein kinase domain is found at 1 to 283 (MESFKYCFDN…DRLRRLFIQD (283 aa)).

It belongs to the protein kinase superfamily. Ser/Thr protein kinase family. Poxviruses subfamily. Interacts with B1/VPK1. Interacts with host VRK1. Interacts with host VRK2.

The protein localises to the host nucleus. Its activity is regulated as follows. Both catalytically active kinases B1/VPK1 and host VRK2 repress B12 inhibitory activity in a B1/VPK1 deletion mutant strain. Functionally, pseudokinase that plays a role in viral DNA replication repression by activating the antiviral protein BANF1 and inhibiting the activity of host VRK1, a cellular modulator of BANF1. This is Pseudokinase OPG198 (OPG198) from Homo sapiens (Human).